We begin with the raw amino-acid sequence, 317 residues long: Glutathione synthetase (317 aa).

Residues 126–311 enclose the ATP-grasp domain; it reads KFFATQFTQC…IGDKLMDAIA (186 aa). Residue 152 to 208 coordinates ATP; the sequence is AAEHRDIILKPLDGMGGSSIFRHREGDPNLSVILETLTQHGSQQIMAQRYLPEIKDG. The Mg(2+) site is built by Glu282 and Asn284.

Belongs to the prokaryotic GSH synthase family. Mg(2+) serves as cofactor. The cofactor is Mn(2+).

The catalysed reaction is gamma-L-glutamyl-L-cysteine + glycine + ATP = glutathione + ADP + phosphate + H(+). The protein operates within sulfur metabolism; glutathione biosynthesis; glutathione from L-cysteine and L-glutamate: step 2/2. The polypeptide is Glutathione synthetase (Pseudomonas aeruginosa (strain ATCC 15692 / DSM 22644 / CIP 104116 / JCM 14847 / LMG 12228 / 1C / PRS 101 / PAO1)).